A 227-amino-acid polypeptide reads, in one-letter code: Phosphoribosylformylglycinamidine synthase subunit PurQ (227 aa).

Residues serine 3–lysine 227 form the Glutamine amidotransferase type-1 domain. Cysteine 85 acts as the Nucleophile in catalysis. Residues histidine 201 and glutamate 203 contribute to the active site.

As to quaternary structure, part of the FGAM synthase complex composed of 1 PurL, 1 PurQ and 2 PurS subunits.

Its subcellular location is the cytoplasm. It carries out the reaction N(2)-formyl-N(1)-(5-phospho-beta-D-ribosyl)glycinamide + L-glutamine + ATP + H2O = 2-formamido-N(1)-(5-O-phospho-beta-D-ribosyl)acetamidine + L-glutamate + ADP + phosphate + H(+). It catalyses the reaction L-glutamine + H2O = L-glutamate + NH4(+). It participates in purine metabolism; IMP biosynthesis via de novo pathway; 5-amino-1-(5-phospho-D-ribosyl)imidazole from N(2)-formyl-N(1)-(5-phospho-D-ribosyl)glycinamide: step 1/2. Its function is as follows. Part of the phosphoribosylformylglycinamidine synthase complex involved in the purines biosynthetic pathway. Catalyzes the ATP-dependent conversion of formylglycinamide ribonucleotide (FGAR) and glutamine to yield formylglycinamidine ribonucleotide (FGAM) and glutamate. The FGAM synthase complex is composed of three subunits. PurQ produces an ammonia molecule by converting glutamine to glutamate. PurL transfers the ammonia molecule to FGAR to form FGAM in an ATP-dependent manner. PurS interacts with PurQ and PurL and is thought to assist in the transfer of the ammonia molecule from PurQ to PurL. The protein is Phosphoribosylformylglycinamidine synthase subunit PurQ of Pelagibacter ubique (strain HTCC1062).